We begin with the raw amino-acid sequence, 806 residues long: Integrin beta-7 (806 aa).

Positions 1–19 are cleaved as a signal peptide; it reads MVDSSTVLIFLLVLGGGQS. Over 20 to 724 the chain is Extracellular; the sequence is ELDTKITSSG…PQEKGVDHTR (705 aa). Residues 44 to 92 enclose the PSI domain; the sequence is SCQPVPSCQKCILSHPSCAWCKQLNFTASGEAEARRCARREELLARGCP. 26 cysteine pairs are disulfide-bonded: cysteine 51-cysteine 476, cysteine 54-cysteine 80, cysteine 64-cysteine 91, cysteine 216-cysteine 223, cysteine 271-cysteine 311, cysteine 412-cysteine 428, cysteine 448-cysteine 474, cysteine 478-cysteine 497, cysteine 488-cysteine 500, cysteine 502-cysteine 511, cysteine 513-cysteine 545, cysteine 527-cysteine 543, cysteine 537-cysteine 548, cysteine 550-cysteine 559, cysteine 561-cysteine 582, cysteine 566-cysteine 580, cysteine 574-cysteine 585, cysteine 587-cysteine 596, cysteine 598-cysteine 621, cysteine 605-cysteine 619, cysteine 613-cysteine 624, cysteine 626-cysteine 635, cysteine 638-cysteine 641, cysteine 645-cysteine 688, cysteine 651-cysteine 670, and cysteine 654-cysteine 666. A glycan (N-linked (GlcNAc...) asparagine) is linked at asparagine 68. Positions 98–107 are enriched in basic and acidic residues; that stretch reads EPRGRQEVLQ. The interval 98–123 is disordered; sequence EPRGRQEVLQDKPLSQGDRGEGATQL. Positions 150–389 constitute a VWFA domain; it reads YPVDLYYLMD…QLIMDAYDSL (240 aa). Residues serine 161 and serine 163 each contribute to the Mg(2+) site. The Ca(2+) site is built by serine 163, aspartate 166, aspartate 167, and aspartate 198. Asparagine 250 carries N-linked (GlcNAc...) asparagine glycosylation. Positions 254, 256, 258, and 259 each coordinate Ca(2+). Residue glutamate 259 coordinates Mg(2+). An N-linked (GlcNAc...) asparagine glycan is attached at asparagine 279. Positions 289 and 373 each coordinate Ca(2+). An N-linked (GlcNAc...) asparagine glycan is attached at asparagine 434. I-EGF domains lie at 478–512, 513–560, 561–597, and 598–636; these read CGDA…QLCE, CSEA…RLCE, CDDA…RACE, and CSKS…ALCD. Asparagine 531 carries an N-linked (GlcNAc...) asparagine glycan. Asparagine 590 carries an N-linked (GlcNAc...) asparagine glycan. Asparagine 665 and asparagine 674 each carry an N-linked (GlcNAc...) asparagine glycan. The helical transmembrane segment at 725–745 threads the bilayer; the sequence is AIILGCTGGIVAVGLGLVLAY. Residues 746 to 806 are Cytoplasmic-facing; the sequence is RLSVEIYDRR…PSLSLTREAD (61 aa). The interval 786–806 is disordered; the sequence is NPRFQGTNGRSPSLSLTREAD.

Belongs to the integrin beta chain family. In terms of assembly, heterodimer of an alpha and a beta subunit. ITGB7/beta-7 associates with either ITGA4/alpha-4 or ITGAE/alpha-E. Integrin ITGA4/ITGB7 interacts with MADCAM1. Integrin ITGA4/ITGB7 interacts with VCAM1 and fibronectin. Interacts with FLNA (via filamin repeats 4, 9, 12, 17, 19, 21, and 23).

The protein resides in the cell membrane. In terms of biological role, integrin ITGA4/ITGB7 (alpha-4/beta-7) (Peyer patches-specific homing receptor LPAM-1) is an adhesion molecule that mediates lymphocyte migration and homing to gut-associated lymphoid tissue (GALT). Integrin ITGA4/ITGB7 interacts with the cell surface adhesion molecules MADCAM1 which is normally expressed by the vascular endothelium of the gastrointestinal tract. Also interacts with VCAM1 and fibronectin, an extracellular matrix component. It recognizes one or more domains within the alternatively spliced CS-1 region of fibronectin. Interactions involve the tripeptide L-D-T in MADCAM1, and L-D-V in fibronectin. Integrin ITGAE/ITGB7 (alpha-E/beta-7, HML-1) is a receptor for E-cadherin. The chain is Integrin beta-7 (Itgb7) from Mus musculus (Mouse).